The chain runs to 2126 residues: Polycystin family receptor for egg jelly (2126 aa).

Residues 1-18 form the signal peptide; sequence MWPGPALLLLGLGLGLGS. Residues 19–1068 lie on the Extracellular side of the membrane; that stretch reads QPPPTGPRGL…AIISNLTQNP (1050 aa). Residues 20 to 71 form a disordered region; the sequence is PPPTGPRGLPGVLRGAPGLGQGAESSVRGGDTGGLSPRAAPRHASPTPPRRC. 14 N-linked (GlcNAc...) asparagine glycosylation sites follow: Asn84, Asn94, Asn129, Asn192, Asn243, Asn325, Asn571, Asn761, Asn774, Asn807, Asn849, Asn888, Asn960, and Asn1063. The REJ domain occupies 102–797; sequence CIMQPVKINR…SMMFCEFADD (696 aa). The chain crosses the membrane as a helical span at residues 1069-1089; the sequence is ATFLAVLFIMILYAILAFWAL. Residues 1090–1273 lie on the Cytoplasmic side of the membrane; it reads HRDVIDLYFR…VPKPFNRLQR (184 aa). The PLAT domain maps to 1114–1231; the sequence is LCYLVTIFTG…TLDATFSVTN (118 aa). The chain crosses the membrane as a helical span at residues 1274–1294; it reads LSCCLAMLLSSLVCNIMFFNL. Topologically, residues 1295–1311 are extracellular; it reads NQKEKIESRHMHIIRSM. A helical membrane pass occupies residues 1312–1332; the sequence is LIGIESVVITIPVQLLITFFF. Residues 1333–1449 lie on the Cytoplasmic side of the membrane; it reads TYSQKNLKMN…KTQIILPRWC (117 aa). Residues 1379 to 1431 are disordered; the sequence is RAAVSTSAPEEKEAFETSQKHEKADTQMSNKNSSNNNQEASEGVPPKAFSSQP. Positions 1387 to 1403 are enriched in basic and acidic residues; sequence PEEKEAFETSQKHEKAD. A helical transmembrane segment spans residues 1450 to 1470; that stretch reads VYIAWFLVFATSGISSFFIVF. Residues 1471-1483 are Extracellular-facing; sequence YGVTYGYAKSIEW. Residues 1484-1504 form a helical membrane-spanning segment; it reads LFASFCSFCQSVFLVQPCNIL. At 1505-1580 the chain is on the cytoplasmic side; sequence LRSGTRSYKP…RRENRIRRRS (76 aa). Residues 1581–1601 form a helical membrane-spanning segment; that stretch reads FLFLSYLVTHFIFLTLLLLLI. Topologically, residues 1602–1838 are extracellular; it reads FSLRHNDSFY…DFNRKTSSEI (237 aa). Asn1607, Asn1676, Asn1766, and Asn1817 each carry an N-linked (GlcNAc...) asparagine glycan. Residues 1839 to 1859 form a helical membrane-spanning segment; that stretch reads YLYAAILIFFCAYVVDEGYII. Residues 1860 to 1875 are Cytoplasmic-facing; it reads RQERASYIRSVYNLLN. A helical membrane pass occupies residues 1876-1896; the sequence is FSLKCMFALLIVLFFWKYFLA. Residues 1897 to 1918 lie on the Extracellular side of the membrane; it reads TKMVQLYLADPEAFIPFHAVSR. A helical transmembrane segment spans residues 1919-1939; that stretch reads VDHFMRIILAFLLFLTILKTL. At 1940–1964 the chain is on the cytoplasmic side; that stretch reads RYSRFFYNVRLAQKAIQAALPGICH. A helical transmembrane segment spans residues 1965 to 1985; the sequence is TALVVSIYSFMYVAFGYLVFG. Topologically, residues 1986–2019 are extracellular; sequence QHEWNYSNMIHATQTIFSYCVSAFQNTEFSGNKV. A helical membrane pass occupies residues 2020-2040; sequence LGVLFLSSFMLVMICIFINLF. Residues 2041–2126 are Cytoplasmic-facing; that stretch reads QAVILSAYDE…NGKKMIYLVV (86 aa).

The protein belongs to the polycystin family. As to expression, exclusively expressed in testis.

Its subcellular location is the cell membrane. It localises to the cytoplasmic vesicle. The protein resides in the secretory vesicle. The protein localises to the acrosome membrane. It is found in the nucleus. Functionally, testis-specific protein that controls sperm transport and the timing of zona pellucida-evoked exocytosis of the sperm acrosome. This Mus musculus (Mouse) protein is Polycystin family receptor for egg jelly (Pkdrej).